We begin with the raw amino-acid sequence, 277 residues long: Digeranylgeranylglyceryl phosphate synthase (277 aa).

The next 7 helical transmembrane spans lie at 16-36 (ILAG…IPSI), 40-60 (GLVF…NDYF), 101-121 (FLGV…FIYA), 129-149 (FIGN…GALG), 153-173 (VGLA…REIM), 205-225 (IFGV…IGLG), and 257-277 (LKIA…TKGV).

It belongs to the UbiA prenyltransferase family. DGGGP synthase subfamily. Mg(2+) is required as a cofactor.

The protein resides in the cell membrane. It catalyses the reaction sn-3-O-(geranylgeranyl)glycerol 1-phosphate + (2E,6E,10E)-geranylgeranyl diphosphate = 2,3-bis-O-(geranylgeranyl)-sn-glycerol 1-phosphate + diphosphate. Its pathway is membrane lipid metabolism; glycerophospholipid metabolism. In terms of biological role, prenyltransferase that catalyzes the transfer of the geranylgeranyl moiety of geranylgeranyl diphosphate (GGPP) to the C2 hydroxyl of (S)-3-O-geranylgeranylglyceryl phosphate (GGGP). This reaction is the second ether-bond-formation step in the biosynthesis of archaeal membrane lipids. This Pyrococcus abyssi (strain GE5 / Orsay) protein is Digeranylgeranylglyceryl phosphate synthase.